The primary structure comprises 242 residues: Tropomyosin-1 (242 aa).

Disordered regions lie at residues 1–31 and 65–96; these read MDAI…ELTA and TSLT…QTDY. The stretch at 1 to 242 forms a coiled coil; sequence MDAIKKKMSA…DELLLELASM (242 aa). Composition is skewed to basic and acidic residues over residues 13 to 23 and 70 to 96; these read TKLEEADKQAQ and KYNE…QTDY.

This sequence belongs to the tropomyosin family. Homodimer. Expressed ubiquitously.

The sequence is that of Tropomyosin-1 (TPM1) from Podocoryna carnea (Hydrozoan).